Consider the following 397-residue polypeptide: Tauropine dehydrogenase (397 aa).

The protein belongs to the lysopine/nopaline/octopine/opine/vitopine dehydrogenases family.

It carries out the reaction tauropine + NAD(+) + H2O = taurine + pyruvate + NADH + H(+). Subject to substrate inhibition by pyruvate for the reverse reaction but not for the forward reaction of the tauropine dehydrogenase activity. In terms of biological role, may play a role in maintaining a redox balance during environmental and functional hypoxia. Exhibits high specificity for taurine and in addition, requires both alpha amino group and C-2 carbon chain length as a critical factor for active site binding of the amino acid. A methyl group in the beta position may be critical for active site binding of the keto acid. In the reverse reaction requires NAD(H) for the activity but not NADP(H). The protein is Tauropine dehydrogenase of Arabella iricolor (Opal worm).